Consider the following 448-residue polypeptide: Eukaryotic translation initiation factor 3 subunit E (448 aa).

The region spanning 254–423 (TDLFFSPAYI…GTVIMNHPPQ (170 aa)) is the PCI domain.

It belongs to the eIF-3 subunit E family. Component of the eukaryotic translation initiation factor 3 (eIF-3) complex.

Its subcellular location is the cytoplasm. In terms of biological role, component of the eukaryotic translation initiation factor 3 (eIF-3) complex, which is involved in protein synthesis of a specialized repertoire of mRNAs and, together with other initiation factors, stimulates binding of mRNA and methionyl-tRNAi to the 40S ribosome. The eIF-3 complex specifically targets and initiates translation of a subset of mRNAs involved in cell proliferation. This is Eukaryotic translation initiation factor 3 subunit E (int6) from Emericella nidulans (strain FGSC A4 / ATCC 38163 / CBS 112.46 / NRRL 194 / M139) (Aspergillus nidulans).